Reading from the N-terminus, the 344-residue chain is MIKVGIIGYGTIGKRIADAVAMQDDMKVVGVLKVTPDYEAKIALARGFPIYTYSDRFDKFKKAGIEPAGTIEDLIKASDIIIDASPEDVGRENKEKYYQRYDKPVIFQGGEEADVADVSFNALANYEEAKGRRYVRVVSCNTTGITRVLTSLILNGIGIKKARIFIARRGADPKEHKKGPINDVVPNPATVPSHHGPDVQTILKDIDIVTMAIAVPVTIMHMHMAYIELSSTYTKDAVIEAFVKTPRIFLADVGSGFQSLAHVIEYARDLGRSRSDFPEVAIFRDSVTIRGNELYLMYGVHQESIVVPENVDAIRAVLGILPKWRSIEKTDKTLKLITEGKVYG.

NAD(+)-binding positions include 11 to 12 (TI) and Gly110. D-glyceraldehyde 3-phosphate is bound at residue 139 to 141 (SCN). Residue Cys140 is the Nucleophile of the active site. Arg169 serves as a coordination point for NAD(+). 195–196 (HG) provides a ligand contact to D-glyceraldehyde 3-phosphate. Position 302 (Gln302) interacts with NAD(+).

This sequence belongs to the glyceraldehyde-3-phosphate dehydrogenase family. In terms of assembly, homotetramer.

Its subcellular location is the cytoplasm. It catalyses the reaction D-glyceraldehyde 3-phosphate + phosphate + NADP(+) = (2R)-3-phospho-glyceroyl phosphate + NADPH + H(+). The enzyme catalyses D-glyceraldehyde 3-phosphate + phosphate + NAD(+) = (2R)-3-phospho-glyceroyl phosphate + NADH + H(+). Its pathway is carbohydrate degradation; glycolysis; pyruvate from D-glyceraldehyde 3-phosphate: step 1/5. This chain is Glyceraldehyde-3-phosphate dehydrogenase, found in Pyrobaculum islandicum (strain DSM 4184 / JCM 9189 / GEO3).